A 213-amino-acid chain; its full sequence is Pyridoxine/pyridoxamine 5'-phosphate oxidase 2 (213 aa).

Substrate contacts are provided by residues 9–12 and Lys-67; that span reads RQRY. FMN-binding positions include 62-67, 77-78, Lys-84, and Gln-106; these read RTVLLK and FT. Substrate-binding residues include Tyr-124, Arg-128, and Ser-132. FMN contacts are provided by residues 141-142 and Trp-186; that span reads QS. Residue 192–194 participates in substrate binding; sequence RLH. Arg-196 is a binding site for FMN.

This sequence belongs to the pyridoxamine 5'-phosphate oxidase family. As to quaternary structure, homodimer. It depends on FMN as a cofactor.

It catalyses the reaction pyridoxamine 5'-phosphate + O2 + H2O = pyridoxal 5'-phosphate + H2O2 + NH4(+). It carries out the reaction pyridoxine 5'-phosphate + O2 = pyridoxal 5'-phosphate + H2O2. It participates in cofactor metabolism; pyridoxal 5'-phosphate salvage; pyridoxal 5'-phosphate from pyridoxamine 5'-phosphate: step 1/1. Its pathway is cofactor metabolism; pyridoxal 5'-phosphate salvage; pyridoxal 5'-phosphate from pyridoxine 5'-phosphate: step 1/1. Functionally, catalyzes the oxidation of either pyridoxine 5'-phosphate (PNP) or pyridoxamine 5'-phosphate (PMP) into pyridoxal 5'-phosphate (PLP). In Hydrogenovibrio crunogenus (strain DSM 25203 / XCL-2) (Thiomicrospira crunogena), this protein is Pyridoxine/pyridoxamine 5'-phosphate oxidase 2.